Here is a 526-residue protein sequence, read N- to C-terminus: Cholesterol side-chain cleavage enzyme, mitochondrial (526 aa).

Residues 1–36 (MLAKGLSLRSVLVKGCQPFLSPTWQGPVLSTGKGAG) constitute a mitochondrion transit peptide. Residues 30–41 (STGKGAGTSTSS) are compositionally biased toward low complexity. Residues 30–49 (STGKGAGTSTSSPRSFNEIP) are disordered. Residue cysteine 458 participates in heme binding.

This sequence belongs to the cytochrome P450 family. As to quaternary structure, interacts with FDX1/adrenodoxin. The cofactor is heme.

Its subcellular location is the mitochondrion inner membrane. The enzyme catalyses 6 reduced [adrenodoxin] + cholesterol + 3 O2 + 6 H(+) = 4-methylpentanal + pregnenolone + 6 oxidized [adrenodoxin] + 4 H2O. The catalysed reaction is 2 reduced [adrenodoxin] + cholesterol + O2 + 2 H(+) = (22R)-hydroxycholesterol + 2 oxidized [adrenodoxin] + H2O. It carries out the reaction (22R)-hydroxycholesterol + 2 reduced [adrenodoxin] + O2 + 2 H(+) = (20R,22R)-20,22-dihydroxycholesterol + 2 oxidized [adrenodoxin] + H2O. It catalyses the reaction (20R,22R)-20,22-dihydroxycholesterol + 2 reduced [adrenodoxin] + O2 + 2 H(+) = 4-methylpentanal + pregnenolone + 2 oxidized [adrenodoxin] + 2 H2O. It participates in lipid metabolism; C21-steroid hormone metabolism. Its pathway is steroid metabolism; cholesterol metabolism. In terms of biological role, a cytochrome P450 monooxygenase that catalyzes the side-chain hydroxylation and cleavage of cholesterol to pregnenolone, the precursor of most steroid hormones. Catalyzes three sequential oxidation reactions of cholesterol, namely the hydroxylation at C22 followed with the hydroxylation at C20 to yield 20R,22R-hydroxycholesterol that is further cleaved between C20 and C22 to yield the C21-steroid pregnenolone and 4-methylpentanal. Mechanistically, uses molecular oxygen inserting one oxygen atom into a substrate and reducing the second into a water molecule. Two electrons are provided by NADPH via a two-protein mitochondrial transfer system comprising flavoprotein FDXR (adrenodoxin/ferredoxin reductase) and nonheme iron-sulfur protein FDX1 or FDX2 (adrenodoxin/ferredoxin). The sequence is that of Cholesterol side-chain cleavage enzyme, mitochondrial from Mus musculus (Mouse).